Consider the following 376-residue polypeptide: Mitogen-activated protein kinase 5 (376 aa).

Positions 43 to 329 constitute a Protein kinase domain; that stretch reads VPPIRPIGRG…VEEALCYPYL (287 aa). Residues 49–57 and K72 each bind ATP; that span reads IGRGAYGFV. Residue D169 is the Proton acceptor of the active site. T201 is modified (phosphothreonine). The short motif at 201-203 is the TXY element; that stretch reads TEY. Phosphotyrosine is present on Y203. T206 carries the post-translational modification Phosphothreonine.

Belongs to the protein kinase superfamily. CMGC Ser/Thr protein kinase family. MAP kinase subfamily. In terms of processing, autophosphorylated on threonine and tyrosine residues. Dually phosphorylated on Thr-201 and Tyr-203, which activates the enzyme.

The catalysed reaction is L-seryl-[protein] + ATP = O-phospho-L-seryl-[protein] + ADP + H(+). It catalyses the reaction L-threonyl-[protein] + ATP = O-phospho-L-threonyl-[protein] + ADP + H(+). Its activity is regulated as follows. Activated by threonine and tyrosine phosphorylation. Activated by the MAP kinase kinase MKK2. Activated by the MAP kinase kinase MKK6 in vitro. The protein is Mitogen-activated protein kinase 5 (MPK5) of Arabidopsis thaliana (Mouse-ear cress).